Consider the following 41-residue polypeptide: Photosystem I reaction center subunit IX (41 aa).

The helical transmembrane segment at 7–27 (YLSTAPVITAIWLGITAGILI) threads the bilayer.

The protein belongs to the PsaJ family.

The protein resides in the cellular thylakoid membrane. Functionally, may help in the organization of the PsaE and PsaF subunits. The polypeptide is Photosystem I reaction center subunit IX (Cyanothece sp. (strain PCC 7425 / ATCC 29141)).